Reading from the N-terminus, the 340-residue chain is Uroporphyrinogen decarboxylase (340 aa).

Substrate contacts are provided by residues 21-25 (RQAGR), F40, D71, Y147, S202, and H316.

Belongs to the uroporphyrinogen decarboxylase family. As to quaternary structure, homodimer.

The protein resides in the cytoplasm. It carries out the reaction uroporphyrinogen III + 4 H(+) = coproporphyrinogen III + 4 CO2. It functions in the pathway porphyrin-containing compound metabolism; protoporphyrin-IX biosynthesis; coproporphyrinogen-III from 5-aminolevulinate: step 4/4. Functionally, catalyzes the decarboxylation of four acetate groups of uroporphyrinogen-III to yield coproporphyrinogen-III. The polypeptide is Uroporphyrinogen decarboxylase (Wolinella succinogenes (strain ATCC 29543 / DSM 1740 / CCUG 13145 / JCM 31913 / LMG 7466 / NCTC 11488 / FDC 602W) (Vibrio succinogenes)).